Reading from the N-terminus, the 210-residue chain is MADKSEMKKLLLTPVLGNNPIALQVLGVCSALAVTSQMKTAFVMTLAVTAVTAFSNLFISLIRNQIPNSVRIIAQMAVIASLVIVVDQVLKAYAYEISKQLSVFVGLIITNCIVMGRAEAYAMKSAPLPSFLDGIGNGLGYGAVLLTVATVREILGSGTWFGIELLPLVNNGGWYVPNGLLLLPPSAFFIIGLIIWGVRTRDPKQVEAKD.

The next 5 helical transmembrane spans lie at 42-62, 72-92, 103-123, 131-151, and 178-198; these read FVMT…ISLI, IIAQ…VLKA, VFVG…AYAM, FLDG…VATV, and NGLL…IWGV.

It belongs to the NqrDE/RnfAE family. As to quaternary structure, composed of six subunits; NqrA, NqrB, NqrC, NqrD, NqrE and NqrF.

The protein resides in the cell inner membrane. The enzyme catalyses a ubiquinone + n Na(+)(in) + NADH + H(+) = a ubiquinol + n Na(+)(out) + NAD(+). Functionally, NQR complex catalyzes the reduction of ubiquinone-1 to ubiquinol by two successive reactions, coupled with the transport of Na(+) ions from the cytoplasm to the periplasm. NqrA to NqrE are probably involved in the second step, the conversion of ubisemiquinone to ubiquinol. In Aeromonas salmonicida (strain A449), this protein is Na(+)-translocating NADH-quinone reductase subunit D.